A 425-amino-acid chain; its full sequence is Intermediate conductance calcium-activated potassium channel protein 4 (425 aa).

A helical membrane pass occupies residues 30-50; sequence LVLAGTGIGLMVLHAEMLWFL. The helical transmembrane segment at 59–79 threads the bilayer; it reads LLVKCLITLSTAFLLCLIVVF. The helical transmembrane segment at 105–121 threads the bilayer; that stretch reads VAQILLELLVCGVHPVP. The helical transmembrane segment at 141–161 threads the bilayer; the sequence is GFLGEGEALLSLAMLLRLYLV. The chain crosses the membrane as a helical span at residues 205-225; sequence LLLGLTLGLWLTTAWVLSVAE. Positions 239-259 form an intramembrane region, pore-forming; it reads LWLIPITFLTIGYGDVVPGTL. Residues 263 to 283 traverse the membrane as a helical segment; the sequence is IVCLCTGVMGVCCTALLVAVV. The calmodulin-binding stretch occupies residues 284-345; it reads ARKLEFNKAE…RRHQRKMLAA (62 aa). His-356 carries the post-translational modification Phosphohistidine.

The protein belongs to the potassium channel KCNN family. KCa3.1/KCNN4 subfamily. As to quaternary structure, homodimer. Homotetramer. Heterotetramer of potassium channel proteins. Interacts with MTMR6; this interaction leads to selective dephosphorylation of PI(3)P in a lipid microdomain adjacent to KCNN4, resulting in a decrease of intermediate conductance calcium-activated potassium channel activity. Interacts (via the C-tail domain) with CALM1; the calmodulin binding is constitutive, does not require calcium and mediates calcium-dependent gating and four calmodulin molecules bind to one channel tetramer. In terms of processing, phosphorylation at His-356 by NDKB activates the intermediate conductance calcium-activated potassium channel activity, and conversely it's dephosphorylation by PHPT1 inhibits this activity.

It localises to the cell membrane. The protein resides in the cell projection. Its subcellular location is the ruffle membrane. It carries out the reaction K(+)(in) = K(+)(out). Intermediate conductance calcium-activated potassium channel that mediates the voltage-independent transmembrane transfer of potassium across the cell membrane through a constitutive interaction with calmodulin which binds the intracellular calcium allowing its opening. The current is characterized by a voltage-independent activation, an intracellular calcium concentration increase-dependent activation and a single-channel conductance of about 25 picosiemens. Also presents an inwardly rectifying current, thus reducing its already small outward conductance of potassium ions, which is particularly the case when the membrane potential displays positive values, above + 20 mV. Controls calcium influx during vascular contractility by being responsible of membrane hyperpolarization induced by vasoactive factors in proliferative vascular smooth muscle cell types. Following calcium influx, the consecutive activation of KCNN4 channel leads to a hyperpolarization of the cell membrane potential and hence an increase of the electrical driving force for further calcium influx promoting sustained calcium entry in response to stimulation with chemotactic peptides. Required for maximal calcium influx and proliferation during the reactivation of naive T-cells. Plays a role in the late stages of EGF-induced macropinocytosis through activation by PI(3)P. This chain is Intermediate conductance calcium-activated potassium channel protein 4, found in Rattus norvegicus (Rat).